We begin with the raw amino-acid sequence, 427 residues long: Homeotic protein caudal (427 aa).

The tract at residues 104 to 273 (QLMQQHHHHH…QPQPGKTRTK (170 aa)) is disordered. Positions 116 to 129 (ASSSSASSGSSSSG) are enriched in low complexity. Gly residues predominate over residues 145 to 164 (GVGGAGGGGGVGGATDGGPG). Polar residues predominate over residues 183 to 195 (ITVSGSEISSPGA). Positions 209-243 (HLSAVANNNNNNNNNNNSPSTHNNNNNNNSVSNNN) are enriched in low complexity. Threonine 245 is modified (phosphothreonine). Residues 252–257 (YFDWMK) carry the Antp-type hexapeptide motif. The segment at residues 273 to 332 (KDKYRVVYTDFQRLELEKEYCTSRYITIRRKSELAQTLSLSERQVKIWFQNRRAKERKQN) is a DNA-binding region (homeobox).

This sequence belongs to the Caudal homeobox family. In terms of tissue distribution, maternally localized in an anteroposterior gradient in the syncytial blastoderm. Also expressed in the pole cells. Zygotically localized in the primordia of the terminal abdominal segment, the hindgut and in the posterior midgut rudiment. Expressed in the gut, the gonads and parts of the genital disks of third instar larvae (at protein level).

Its subcellular location is the nucleus. Caudal (cad) is one of a number of transcription factors controlling segmentation of the embryo. Further transcriptional regulation via a 5' flanking region containing DNA replication-related elements (DRE) and by dref also regulated by trh and tgo via the CNS midline element. Alongside Bicoid (bcd), caudal forms concentration gradients down the anterior-posterior (A-P) axis providing positional information and subsequent induction of the gap genes. Plays a role in gastrulation/germ band extension, hindgut morphogenesis, positive regulation of cell proliferation, genital disk development and pattern formation. Acts as a key regulator of the Hox gene network and activates transcription via the downstream core promoter element (DPE) relative to the TATA box. Plays a role in the establishment of the hindgut and in the invagination of the hindgut primordium during gastrulation. These effects on the gut are achieved by acting combinatorially at the posterior of the embryo to activate transcription of different targets including fog, fkh and wg. Caudal is involved in regulation of proliferation through transactivation of the E2F gene. Postembryonically its function is mostly restricted to the intestine where it regulates antimicrobial peptide (AMP) levels preserving the normal gut flora. The protein is Homeotic protein caudal (cad) of Drosophila melanogaster (Fruit fly).